The following is a 100-amino-acid chain: Urease subunit gamma (100 aa).

The protein belongs to the urease gamma subunit family. As to quaternary structure, heterotrimer of UreA (gamma), UreB (beta) and UreC (alpha) subunits. Three heterotrimers associate to form the active enzyme.

Its subcellular location is the cytoplasm. The enzyme catalyses urea + 2 H2O + H(+) = hydrogencarbonate + 2 NH4(+). It functions in the pathway nitrogen metabolism; urea degradation; CO(2) and NH(3) from urea (urease route): step 1/1. This Edwardsiella ictaluri (strain 93-146) protein is Urease subunit gamma.